Reading from the N-terminus, the 256-residue chain is Transcription factor BHLH094 (256 aa).

A disordered region spans residues 1–125; the sequence is MDPAPSLAAE…TPPEPPKQDY (125 aa). A compositionally biased stretch (basic and acidic residues) spans 79-97; sequence PEAKRLKPMKSSDKNDSLR. Positions 134–147 are basic motif; degenerate; it reads QATDSHSLAERARR. The bHLH domain occupies 134–184; the sequence is QATDSHSLAERARREKISERMKILQDLVPGCNKVIGKASVLDEIINYIQSL. The segment at 148–184 is helix-loop-helix motif; the sequence is EKISERMKILQDLVPGCNKVIGKASVLDEIINYIQSL.

It belongs to the bHLH protein family. Interacts with RSS3. Forms a ternary complex with RSS3 and TIFY11A/JAZ9 in the nucleus.

It localises to the nucleus. Functionally, transcription factor that forms a ternary complex with RSS3 and TIFY11A/JAZ9 to negatively regulate jasmonate-responsive genes. The chain is Transcription factor BHLH094 from Oryza sativa subsp. japonica (Rice).